The following is an 803-amino-acid chain: MANVSKKVSWSGRDRDDEEGAPLLRRTGQPDEETPLLNGAGPGARQSHSALFRIGQMNNVELDDELLDPEVDPPHTFPKEIPHNEKLLSLKYESLDYDNSENQLFLEEERRINHTAFRTVEIKRWVICALIGILTGLVACFIDIVVENLAGLKYRVIKDNIDKFTEKGGLSFSLLLWATLNSAFVLVGSVIVAFIEPVAAGSGIPQIKCFLNGVKIPHVVRLKTLVIKVSGVILSVVGGLAVGKEGPMIHSGSVIAAGISQGRSTSLKRDFKIFEYFRRDTEKRDFVSAGAAAGVSAAFGAPVGGVLFSLEEGASFWNQFLTWRIFFASMISTFTLNFVLSIYHGNMWDLSSPGLINFGRFDSEKMAYTIHEIPVFIAMGVVGGILGAVFNALNYWLTMFRIRYIHRPCLQVIEAMLVAAVTATVAFVLIYSSRDCQPLQGSSMSYPLQLFCADGEYNSMAAAFFNTPEKSVVSLFHDPPGSYNPMTLGLFTLVYFFLACWTYGLTVSAGVFIPSLLIGAAWGRLFGISMSYLTGAAIWADPGKYALMGAAAQLGGIVRMTLSLTVIMMEATSNVTYGFPIMLVLMTAKIVGDVFIEGLYDMHIQLQSVPFLHWEAPVTSHSLTAREVMSTPVTCLRRREKVGIIVDVLSDTASNHNGFPVVEDVGDTQPARLQGLILRSQLIVLLKHKVFVERSNMGLVQRRLRLKDFRDAYPRFPPIQSIHVSQDERECTMDLSEFMNPSPYTVPQEASLPRVFKLFRALGLRHLVVVDNHNQVVGLVTRKDLARYRLGKGGLEELSLAQT.

Residues 1 to 46 (MANVSKKVSWSGRDRDDEEGAPLLRRTGQPDEETPLLNGAGPGARQ) are disordered. At 1 to 124 (MANVSKKVSW…TAFRTVEIKR (124 aa)) the chain is on the cytoplasmic side. Residue Ser-9 is modified to Phosphoserine. 2 helical membrane passes run 125–157 (WVIC…YRVI) and 172–195 (FSLL…VAFI). The Selectivity filter part_1 signature appears at 201-205 (GSGIP). A chloride-binding site is contributed by Ser-202. Residues 204–211 (IPQIKCFL) constitute an intramembrane region (helical). Transmembrane regions (helical) follow at residues 221-239 (RLKT…VVGG) and 245-262 (EGPM…ISQG). Positions 243 to 247 (GKEGP) match the Selectivity filter part_2 motif. Intramembrane regions (helical) lie at residues 286-298 (FVSA…VSAA) and 302-310 (PVGGVLFSL). Transmembrane regions (helical) follow at residues 320-339 (FLTW…LNFV), 373-403 (IPVF…FRIR), 408-430 (PCLQ…FVLI), 485-505 (PMTL…TYGL), and 510-533 (GVFI…MSYL). A Selectivity filter part_3 motif is present at residues 510–514 (GVFIP). Phe-512 is a chloride binding site. An intramembrane region (helical) is located at residues 543–557 (GKYALMGAAAQLGGI). The segment at residues 558–560 (VRM) is an intramembrane region (note=Loop between two helices). An intramembrane region (helical) is located at residues 561 to 572 (TLSLTVIMMEAT). The segment at residues 573-576 (SNVT) is an intramembrane region (note=Loop between two helices). The chain crosses the membrane as a helical span at residues 577–595 (YGFPIMLVLMTAKIVGDVF). Residues 596 to 803 (IEGLYDMHIQ…GLEELSLAQT (208 aa)) lie on the Cytoplasmic side of the membrane. Residue Tyr-600 coordinates chloride. 2 consecutive CBS domains span residues 629-693 (MSTP…VFVE) and 739-797 (MNPS…GLEE). ATP contacts are provided by residues 656–658 (HNG) and 781–784 (TRKD). The residue at position 799 (Ser-799) is a Phosphoserine.

This sequence belongs to the chloride channel (TC 2.A.49) family. ClC-7/CLCN7 subfamily. As to quaternary structure, chloride channel 7 are heteromers of alpha (CLCN7) and beta (OSTM1) subunits. In terms of tissue distribution, brain, testis, muscle and kidney.

It is found in the lysosome membrane. It carries out the reaction 2 chloride(in) + H(+)(out) = 2 chloride(out) + H(+)(in). In terms of biological role, slowly voltage-gated channel mediating the exchange of chloride ions against protons. Functions as antiporter and contributes to the acidification of the lysosome lumen and may be involved in maintaining lysosomal pH. The CLC channel family contains both chloride channels and proton-coupled anion transporters that exchange chloride or another anion for protons. The presence of conserved gating glutamate residues is typical for family members that function as antiporters. In Rattus norvegicus (Rat), this protein is H(+)/Cl(-) exchange transporter 7 (Clcn7).